The chain runs to 406 residues: Zinc finger CCCH domain-containing protein 15 homolog (406 aa).

Positions 1-11 (MPPKKAPAGPS) are enriched in low complexity. The segment at 1 to 70 (MPPKKAPAGP…DKKKDEKEKK (70 aa)) is disordered. The segment covering 12-28 (KKTEQKKKEKVIEDKTF) has biased composition (basic and acidic residues). Positions 38–50 (QQKFIQQVQKQVQ) are enriched in low complexity. Over residues 56 to 70 (PRQDGDKKKDEKEKK) the composition is skewed to basic and acidic residues. Residues 57-82 (RQDGDKKKDEKEKKLADLREMASIFK) adopt a coiled-coil conformation. 2 C3H1-type zinc fingers span residues 94-121 (DPKS…HDLS) and 166-203 (PTTE…HALP). Positions 336 to 382 (VDGSGTIASSTRLLDQATEAAKTAAAEDGAASDDENPSSSAPANDAA) are disordered. Low complexity-rich tracts occupy residues 352 to 364 (ATEA…AEDG) and 372 to 382 (PSSSAPANDAA).

It belongs to the ZC3H15/TMA46 family.

This chain is Zinc finger CCCH domain-containing protein 15 homolog, found in Drosophila pseudoobscura pseudoobscura (Fruit fly).